The following is a 610-amino-acid chain: Serine/threonine-protein kinase RCK2 (610 aa).

Disordered stretches follow at residues 1 to 55 (MLKI…QDKN) and 99 to 127 (TSVP…SLSE). The segment covering 11–24 (KKPDQADLSQESKK) has biased composition (basic and acidic residues). Over residues 31–55 (RSSGTNNKDVSQITSSPKKSFQDKN) the composition is skewed to polar residues. Serine 46 and serine 50 each carry phosphoserine. In terms of domain architecture, Protein kinase spans 163-478 (YKLINKIGEG…IDQFLDDPWL (316 aa)). An ATP-binding site is contributed by 169–177 (IGEGAFSKV). Serine 187 carries the phosphoserine modification. Lysine 201 contacts ATP. The active-site Proton acceptor is the aspartate 313. Threonine 350 bears the Phosphothreonine mark. Positions 493–506 (KKAGTSERRHPHKK) are calmodulin-binding. Serine 520 is modified (phosphoserine). The segment at 541–564 (EDRMGTRGGLGSLAEDEELEDSYS) is disordered.

Belongs to the protein kinase superfamily. CAMK Ser/Thr protein kinase family. CaMK subfamily. Post-translationally, autophosphorylated. Phosphorylated by HOG1 at Ser-520 after osmotic stress.

The protein localises to the cytoplasm. The catalysed reaction is L-seryl-[protein] + ATP = O-phospho-L-seryl-[protein] + ADP + H(+). It carries out the reaction L-threonyl-[protein] + ATP = O-phospho-L-threonyl-[protein] + ADP + H(+). Activated by Ser-520 phosphorylation by HOG1. Functionally, serine/threonine-protein kinase involved in a signal transduction pathway that is activated by changes in the osmolarity of the extracellular environment. The sequence is that of Serine/threonine-protein kinase RCK2 (RCK2) from Saccharomyces cerevisiae (strain ATCC 204508 / S288c) (Baker's yeast).